The primary structure comprises 197 residues: Nucleoside triphosphate pyrophosphatase (197 aa).

D72 serves as the catalytic Proton acceptor.

It belongs to the Maf family. Requires a divalent metal cation as cofactor.

It localises to the cytoplasm. The catalysed reaction is a ribonucleoside 5'-triphosphate + H2O = a ribonucleoside 5'-phosphate + diphosphate + H(+). The enzyme catalyses a 2'-deoxyribonucleoside 5'-triphosphate + H2O = a 2'-deoxyribonucleoside 5'-phosphate + diphosphate + H(+). Its function is as follows. Nucleoside triphosphate pyrophosphatase. May have a dual role in cell division arrest and in preventing the incorporation of modified nucleotides into cellular nucleic acids. This chain is Nucleoside triphosphate pyrophosphatase, found in Corynebacterium glutamicum (strain R).